The primary structure comprises 290 residues: 33 kDa chaperonin (290 aa).

2 cysteine pairs are disulfide-bonded: Cys-235–Cys-237 and Cys-268–Cys-271.

This sequence belongs to the HSP33 family. Under oxidizing conditions two disulfide bonds are formed involving the reactive cysteines. Under reducing conditions zinc is bound to the reactive cysteines and the protein is inactive.

It is found in the cytoplasm. In terms of biological role, redox regulated molecular chaperone. Protects both thermally unfolding and oxidatively damaged proteins from irreversible aggregation. Plays an important role in the bacterial defense system toward oxidative stress. In Streptococcus sanguinis (strain SK36), this protein is 33 kDa chaperonin.